We begin with the raw amino-acid sequence, 184 residues long: ATP synthase subunit b (184 aa).

A helical membrane pass occupies residues 25–45 (IFPSWPIMLATLVSFTILLVV).

Belongs to the ATPase B chain family. In terms of assembly, F-type ATPases have 2 components, F(1) - the catalytic core - and F(0) - the membrane proton channel. F(1) has five subunits: alpha(3), beta(3), gamma(1), delta(1), epsilon(1). F(0) has three main subunits: a(1), b(2) and c(10-14). The alpha and beta chains form an alternating ring which encloses part of the gamma chain. F(1) is attached to F(0) by a central stalk formed by the gamma and epsilon chains, while a peripheral stalk is formed by the delta and b chains.

Its subcellular location is the cell membrane. In terms of biological role, f(1)F(0) ATP synthase produces ATP from ADP in the presence of a proton or sodium gradient. F-type ATPases consist of two structural domains, F(1) containing the extramembraneous catalytic core and F(0) containing the membrane proton channel, linked together by a central stalk and a peripheral stalk. During catalysis, ATP synthesis in the catalytic domain of F(1) is coupled via a rotary mechanism of the central stalk subunits to proton translocation. Functionally, component of the F(0) channel, it forms part of the peripheral stalk, linking F(1) to F(0). This is ATP synthase subunit b from Mycoplasma mobile (strain ATCC 43663 / 163K / NCTC 11711) (Mesomycoplasma mobile).